Reading from the N-terminus, the 208-residue chain is Uracil phosphoribosyltransferase (208 aa).

Residues Arg78, Arg103, and 130–138 each bind 5-phospho-alpha-D-ribose 1-diphosphate; that span reads DPMLATGGS. Residues Ile193 and 198–200 contribute to the uracil site; that span reads GDA. Position 199 (Asp199) interacts with 5-phospho-alpha-D-ribose 1-diphosphate.

It belongs to the UPRTase family. Mg(2+) is required as a cofactor.

It carries out the reaction UMP + diphosphate = 5-phospho-alpha-D-ribose 1-diphosphate + uracil. It participates in pyrimidine metabolism; UMP biosynthesis via salvage pathway; UMP from uracil: step 1/1. With respect to regulation, allosterically activated by GTP. Catalyzes the conversion of uracil and 5-phospho-alpha-D-ribose 1-diphosphate (PRPP) to UMP and diphosphate. This is Uracil phosphoribosyltransferase from Shewanella denitrificans (strain OS217 / ATCC BAA-1090 / DSM 15013).